The primary structure comprises 562 residues: Potassium-transporting ATPase potassium-binding subunit (562 aa).

12 consecutive transmembrane segments (helical) span residues 5-25, 65-85, 135-155, 181-201, 257-277, 283-303, 331-351, 358-378, 381-401, 422-442, 486-506, and 528-548; these read GILA…PLGG, AYLR…YAVF, IGIT…AMAF, LLLP…VPET, ILEI…AGHF, LAIV…YIVY, FGLP…TGAV, LMPL…IFGG, VGLL…GLMV, AAML…MALP, ISIG…MLAI, and FAFG…TFFP.

This sequence belongs to the KdpA family. As to quaternary structure, the system is composed of three essential subunits: KdpA, KdpB and KdpC.

It localises to the cell membrane. Its function is as follows. Part of the high-affinity ATP-driven potassium transport (or Kdp) system, which catalyzes the hydrolysis of ATP coupled with the electrogenic transport of potassium into the cytoplasm. This subunit binds the extracellular potassium ions and delivers the ions to the membrane domain of KdpB through an intramembrane tunnel. The sequence is that of Potassium-transporting ATPase potassium-binding subunit from Alicyclobacillus acidocaldarius subsp. acidocaldarius (strain ATCC 27009 / DSM 446 / BCRC 14685 / JCM 5260 / KCTC 1825 / NBRC 15652 / NCIMB 11725 / NRRL B-14509 / 104-IA) (Bacillus acidocaldarius).